We begin with the raw amino-acid sequence, 84 residues long: Putative membrane protein insertion efficiency factor (84 aa).

Belongs to the UPF0161 family.

It localises to the cell inner membrane. Its function is as follows. Could be involved in insertion of integral membrane proteins into the membrane. The polypeptide is Putative membrane protein insertion efficiency factor (Shewanella amazonensis (strain ATCC BAA-1098 / SB2B)).